We begin with the raw amino-acid sequence, 431 residues long: Enolase (431 aa).

Residue glutamine 168 participates in (2R)-2-phosphoglycerate binding. Residue glutamate 210 is the Proton donor of the active site. Residues aspartate 247, glutamate 291, and aspartate 318 each contribute to the Mg(2+) site. Lysine 343, arginine 372, serine 373, and lysine 394 together coordinate (2R)-2-phosphoglycerate. The Proton acceptor role is filled by lysine 343.

Belongs to the enolase family. Component of the RNA degradosome, a multiprotein complex involved in RNA processing and mRNA degradation. It depends on Mg(2+) as a cofactor.

The protein resides in the cytoplasm. It localises to the secreted. The protein localises to the cell surface. It catalyses the reaction (2R)-2-phosphoglycerate = phosphoenolpyruvate + H2O. It functions in the pathway carbohydrate degradation; glycolysis; pyruvate from D-glyceraldehyde 3-phosphate: step 4/5. Catalyzes the reversible conversion of 2-phosphoglycerate (2-PG) into phosphoenolpyruvate (PEP). It is essential for the degradation of carbohydrates via glycolysis. This Acinetobacter baylyi (strain ATCC 33305 / BD413 / ADP1) protein is Enolase.